Consider the following 178-residue polypeptide: Large ribosomal subunit protein uL6 (178 aa).

This sequence belongs to the universal ribosomal protein uL6 family. Part of the 50S ribosomal subunit.

In terms of biological role, this protein binds to the 23S rRNA, and is important in its secondary structure. It is located near the subunit interface in the base of the L7/L12 stalk, and near the tRNA binding site of the peptidyltransferase center. This Staphylococcus saprophyticus subsp. saprophyticus (strain ATCC 15305 / DSM 20229 / NCIMB 8711 / NCTC 7292 / S-41) protein is Large ribosomal subunit protein uL6.